The primary structure comprises 87 residues: Small ribosomal subunit protein uS17 (87 aa).

It belongs to the universal ribosomal protein uS17 family. Part of the 30S ribosomal subunit.

Functionally, one of the primary rRNA binding proteins, it binds specifically to the 5'-end of 16S ribosomal RNA. In Staphylococcus haemolyticus (strain JCSC1435), this protein is Small ribosomal subunit protein uS17.